A 501-amino-acid chain; its full sequence is Nuclear receptor-binding protein 2 (501 aa).

The tract at residues 1 to 33 (MAAPEPAPRRAREREREREDESEDESDILEESP) is disordered. Over residues 7-19 (APRRARERERERE) the composition is skewed to basic and acidic residues. The span at 20–30 (DESEDESDILE) shows a compositional bias: acidic residues. Residues 38–306 (QKRREQVNQG…AHSLLFHRVL (269 aa)) form the Protein kinase domain. A phosphothreonine mark is found at Thr409 and Thr411.

Belongs to the protein kinase superfamily. Ser/Thr protein kinase family.

The protein localises to the cytoplasm. May regulate apoptosis of neural progenitor cells during their differentiation. The protein is Nuclear receptor-binding protein 2 of Homo sapiens (Human).